The chain runs to 451 residues: Glycine--tRNA ligase (451 aa).

Positions 101 and 151 each coordinate substrate. ATP-binding positions include Arg183–Glu185, Phe193–Phe198, Glu267–Leu268, and Gly312–Arg315. A substrate-binding site is contributed by Phe198–Glu202. Glu308 to Gly312 provides a ligand contact to substrate.

Belongs to the class-II aminoacyl-tRNA synthetase family. Homodimer.

It is found in the cytoplasm. The catalysed reaction is tRNA(Gly) + glycine + ATP = glycyl-tRNA(Gly) + AMP + diphosphate. Functionally, catalyzes the attachment of glycine to tRNA(Gly). The protein is Glycine--tRNA ligase of Treponema denticola (strain ATCC 35405 / DSM 14222 / CIP 103919 / JCM 8153 / KCTC 15104).